The primary structure comprises 188 residues: RWD domain-containing protein 4 (188 aa).

The 103-residue stretch at 9–111 (MELEALRSIY…EYAKDNKEQF (103 aa)) folds into the RWD domain. The segment at 132 to 167 (TPSAAPSSKKKDKKEQLSKAQKRKLADKTDHKGELP) is disordered. Basic and acidic residues predominate over residues 155–166 (KLADKTDHKGEL).

The chain is RWD domain-containing protein 4 (Rwdd4) from Rattus norvegicus (Rat).